We begin with the raw amino-acid sequence, 197 residues long: Large ribosomal subunit protein eL15 (197 aa).

Composition is skewed to basic residues over residues 70-90 (PKGGRRKSRPKKGRRPKRMGK), 163-179 (RGKTGAGKKARGLRKRG), and 187-197 (PSLRAHRRRGK). Disordered regions lie at residues 70–99 (PKGGRRKSRPKKGRRPKRMGKNKFSPGKSK) and 163–197 (RGKTGAGKKARGLRKRGKGAEKVRPSLRAHRRRGK).

It belongs to the eukaryotic ribosomal protein eL15 family.

This Methanopyrus kandleri (strain AV19 / DSM 6324 / JCM 9639 / NBRC 100938) protein is Large ribosomal subunit protein eL15.